Consider the following 455-residue polypeptide: Kynurenine--oxoglutarate transaminase 3 (455 aa).

Residue glycine 72 coordinates substrate. Lysine 117 carries the post-translational modification N6-acetyllysine; alternate. The residue at position 117 (lysine 117) is an N6-succinyllysine; alternate. Asparagine 219 contributes to the substrate binding site. Residue lysine 281 is modified to N6-(pyridoxal phosphate)lysine. Substrate is bound at residue arginine 430.

The protein belongs to the class-I pyridoxal-phosphate-dependent aminotransferase family. As to quaternary structure, homodimer. The cofactor is pyridoxal 5'-phosphate. As to expression, widely expressed, with higher expression levels in liver, kidney, heart and neuroendocrine tissues.

The enzyme catalyses L-kynurenine + 2-oxoglutarate = kynurenate + L-glutamate + H2O. It catalyses the reaction L-kynurenine + glyoxylate = kynurenate + glycine + H2O. The catalysed reaction is 3-hydroxy-L-kynurenine + glyoxylate = xanthurenate + glycine + H2O. It carries out the reaction an S-substituted L-cysteine + H2O = a thiol + pyruvate + NH4(+). It participates in amino-acid degradation; L-kynurenine degradation; kynurenate from L-kynurenine: step 1/2. Kynurenine transamination is competitively inhibited by cysteine, glutamine, histidine, methionine, leucine, or phenylalanine. Functionally, catalyzes the irreversible transamination of the L-tryptophan metabolite L-kynurenine to form kynurenic acid (KA), an intermediate in the tryptophan catabolic pathway which is also a broad spectrum antagonist of the three ionotropic excitatory amino acid receptors among others. May catalyze the beta-elimination of S-conjugates and Se-conjugates of L-(seleno)cysteine, resulting in the cleavage of the C-S or C-Se bond. Has transaminase activity towards L-kynurenine, tryptophan, phenylalanine, serine, cysteine, methionine, histidine, glutamine and asparagine with glyoxylate as an amino group acceptor (in vitro). Has lower activity with 2-oxoglutarate as amino group acceptor (in vitro). The sequence is that of Kynurenine--oxoglutarate transaminase 3 (Kyat3) from Mus musculus (Mouse).